The primary structure comprises 519 residues: Glycerophosphoinositol permease 1 (519 aa).

Residues 1-32 (MSDLVKSSEVIETTEVPPHNNNNNKRHFKYDS) are disordered. Residues 39 to 59 (LAGGVKLKDALMILCAGFALI) traverse the membrane as a helical segment. N-linked (GlcNAc...) asparagine glycosylation is present at Asn93. Helical transmembrane passes span 94-114 (ASLV…DYIG), 117-137 (WSIV…AASH), and 141-161 (VNGM…GIGA). Residue Asn175 is glycosylated (N-linked (GlcNAc...) asparagine). The next 8 membrane-spanning stretches (helical) occupy residues 186–206 (ILAT…IFLI), 216–236 (DAIW…VFYF), 273–293 (VAWF…AGII), 313–333 (LLLG…VDIL), 337–357 (YTMM…GCGY), 363–383 (ITGL…FGPG), 404–424 (GISA…FSPI), and 432–452 (WTFI…FIFI). Over residues 487 to 500 (EEEDLEGSSEDSSD) the composition is skewed to acidic residues. The segment at 487–519 (EEEDLEGSSEDSSDGEIVKNNTKNDVEKVDALK) is disordered. The N-linked (GlcNAc...) asparagine glycan is linked to Asn506. The segment covering 508-519 (TKNDVEKVDALK) has biased composition (basic and acidic residues).

This sequence belongs to the major facilitator superfamily. Sugar transporter (TC 2.A.1.1) family.

It localises to the cell membrane. The catalysed reaction is sn-glycero-3-phospho-1D-myo-inositol(out) = sn-glycero-3-phospho-1D-myo-inositol(in). In terms of biological role, glycerophosphodiester transporter that mediates uptake of glycerophosphoinositol (GroPIns) as a source of inositol and phosphate. Does not possess detectable glycerophosphocholine (GroPCho) transport activity. Although no glycerophosphoinositol transport activity occurs in the absence of GIT1, C.albicans is still able to use glycerophosphoinositol as a phosphate source at pH 7.5, albeit slowly. Thus, a second, GIT1-independent, mechanism must exist for utilizing glycerophosphoinositol as a phosphate source at physiological pH. The expanded ability to utilize GroPIns and GroPCho results from the organism's pathogenic nature and its need to occupy a variety of environments within its host organism. This possibility is buttressed by the fact that GroPIns and GroPCho are present and abundant in human fluids. This chain is Glycerophosphoinositol permease 1, found in Candida albicans (strain SC5314 / ATCC MYA-2876) (Yeast).